We begin with the raw amino-acid sequence, 410 residues long: Tegument protein VP16 homolog (410 aa).

The segment at 388 to 410 (PPSPSEILPGDPPRPPTCGFLTR) is disordered.

Belongs to the herpesviridae tegument protein VP16 protein family. In terms of assembly, associates with the VP16-induced complex; binding to host HCFC1 activates VP16 for association with the octamer motif-binding host protein POU2F1, to form a multiprotein-DNA complex responsible for activating transcription of the viral immediate early genes.

It localises to the virion tegument. The protein resides in the host nucleus. Functionally, transcriptional activator of immediate-early (IE) gene products (alpha genes). Acts as a key activator of lytic infection by initiating the lytic program through the assembly of the transcriptional regulatory VP16-induced complex composed of VP16 and two cellular factors, HCFC1 and POU2F1. VP16-induced complex represents a regulatory switch: when it is on, it promotes IE-gene expression and thus lytic infection, and when it is off, it limits IE-gene transcription favoring latent infection. Its function is as follows. May play a role in the aggregation of tegument proteins around nucleocapsids during virus morphogenesis. This Varicella-zoster virus (strain Dumas) (HHV-3) protein is Tegument protein VP16 homolog.